The following is a 180-amino-acid chain: Type-1 fimbrial protein subunit (180 aa).

An N-terminal signal peptide occupies residues 1–22 (MKKVLLPLAALVLSATASNAMA). An intrachain disulfide couples cysteine 38 to cysteine 78.

The protein belongs to the fimbrial protein family.

The protein localises to the fimbrium. Its function is as follows. Fimbriae (also called pili), polar filaments radiating from the surface of the bacterium to a length of 0.5-1.5 micrometers and numbering 100-300 per cell, enable bacteria to colonize the epithelium of specific host organs. In Serratia marcescens, this protein is Type-1 fimbrial protein subunit (fimA).